We begin with the raw amino-acid sequence, 1224 residues long: Serine/threonine-protein kinase CST20 (1224 aa).

Residues 1–18 are compositionally biased toward polar residues; sequence MSILSENNPTPTSITDPN. Disordered regions lie at residues 1-378 and 403-464; these read MSIL…TAHN and TNSS…HSQE. Composition is skewed to low complexity over residues 57-70 and 95-119; these read NTTS…SLGS and DSGS…NPES. Residues 144–155 are compositionally biased toward basic and acidic residues; it reads HQGDDSDNEKQY. Composition is skewed to polar residues over residues 169 to 191, 201 to 218, and 231 to 240; these read DSYS…NNVS, TSSL…NENA, and PTSKTSSFHD. Positions 242–251 are enriched in low complexity; that stretch reads SSVISSSTSV. Composition is skewed to polar residues over residues 256 to 271 and 305 to 324; these read SNPT…SYKS and DTLS…TLQG. Composition is skewed to low complexity over residues 343–375 and 433–462; these read NTSA…STST and KVRG…NSHS. The region spanning 469–482 is the CRIB domain; the sequence is ISTPFNAKHLAHVG. Disordered regions lie at residues 539-825 and 861-913; these read FHFD…ALAD and LREK…KQAA. Polar residues predominate over residues 544–555; that stretch reads NKSSSSGWSNEN. Gly residues predominate over residues 564–575; the sequence is SNSGSGSGGGGA. The span at 598-607 shows a compositional bias: polar residues; it reads ITPSQSMPTK. Basic and acidic residues predominate over residues 608-622; sequence TESKQSENQHPHEDN. The segment covering 623–636 has biased composition (polar residues); that stretch reads ATQYTPRTPTSHVQ. 3 stretches are compositionally biased toward low complexity: residues 664-677, 690-704, and 730-743; these read PSSQ…SQSD, SPSK…SKSL, and SIPK…SLSS. Over residues 744–755 the composition is skewed to polar residues; the sequence is QLRPATNGSTTA. Over residues 783 to 801 the composition is skewed to pro residues; it reads APPPPPSAPPAPPVPPAPP. Residues 805 to 820 show a composition bias toward polar residues; the sequence is LSEQTSEIPQQRTAPS. The segment covering 861 to 870 has biased composition (basic and acidic residues); that stretch reads LREKNERQNR. Polar residues predominate over residues 871–886; that stretch reads QQETGQNNADTASGGS. Residues 947–1199 form the Protein kinase domain; sequence YVDLVKIGQG…ADELLHDNFI (253 aa). ATP-binding positions include 953–961 and K977; that span reads IGQGASGGV. Catalysis depends on D1067, which acts as the Proton acceptor.

This sequence belongs to the protein kinase superfamily. STE Ser/Thr protein kinase family. STE20 subfamily.

Its subcellular location is the cytoplasm. It is found in the nucleus. The enzyme catalyses L-seryl-[protein] + ATP = O-phospho-L-seryl-[protein] + ADP + H(+). It catalyses the reaction L-threonyl-[protein] + ATP = O-phospho-L-threonyl-[protein] + ADP + H(+). MAP4K component of the MAPK pathway required for the mating pheromone response, and the regulation of cell polarity and cell cycle. Phosphorylates histone H2B to form H2BS10ph. Required for hyphal formation and virulence. In Candida albicans (strain WO-1) (Yeast), this protein is Serine/threonine-protein kinase CST20 (CST20).